The following is a 686-amino-acid chain: DNA ligase (686 aa).

NAD(+) is bound by residues 31–35 (DSEYD), 80–81 (SL), and E109. The active-site N6-AMP-lysine intermediate is K111. Residues R132, E166, K280, and K304 each contribute to the NAD(+) site. Zn(2+) is bound by residues C430, C433, C448, and C453. The BRCT domain occupies 611 to 686 (NVEGILSGKT…IWSEQDLLDL (76 aa)).

It belongs to the NAD-dependent DNA ligase family. LigA subfamily. It depends on Mg(2+) as a cofactor. The cofactor is Mn(2+).

It catalyses the reaction NAD(+) + (deoxyribonucleotide)n-3'-hydroxyl + 5'-phospho-(deoxyribonucleotide)m = (deoxyribonucleotide)n+m + AMP + beta-nicotinamide D-nucleotide.. Functionally, DNA ligase that catalyzes the formation of phosphodiester linkages between 5'-phosphoryl and 3'-hydroxyl groups in double-stranded DNA using NAD as a coenzyme and as the energy source for the reaction. It is essential for DNA replication and repair of damaged DNA. The polypeptide is DNA ligase (Lactococcus lactis subsp. cremoris (strain SK11)).